A 540-amino-acid polypeptide reads, in one-letter code: Putative actin-fragmin kinase DDB_G0287957 (540 aa).

A coiled-coil region spans residues 27–68 (KNENLNIKNEILNNNNNNNNNKNNNNNNNNNNNIENNSKNEN). Disordered stretches follow at residues 37-70 (ILNNNNNNNNNKNNNNNNNNNNNIENNSKNENFN) and 317-341 (NNNNNNNNNNNNNNNNNNNNNINNC).

Belongs to the protein kinase superfamily. AFK Ser/Thr protein kinase family.

This Dictyostelium discoideum (Social amoeba) protein is Putative actin-fragmin kinase DDB_G0287957.